The primary structure comprises 360 residues: Protein DVR-1 (360 aa).

An N-terminal signal peptide occupies residues 1–16; sequence MVWLRLWAFLHILAIV. Positions 17–246 are excised as a propeptide; that stretch reads TLDPELKRRE…LRCKRPRRKR (230 aa). Residues N113, N181, and N301 are each glycosylated (N-linked (GlcNAc...) asparagine). 3 disulfide bridges follow: C259–C325, C288–C357, and C292–C359.

It belongs to the TGF-beta family. In terms of assembly, homodimer. In terms of tissue distribution, vegetal region of the egg.

Its subcellular location is the secreted. In terms of biological role, serves to facilitate the differentiation of either mesoderm or endoderm either as a cofactor in an instructive signal or by providing permissive environment. The sequence is that of Protein DVR-1 (dvr1) from Xenopus laevis (African clawed frog).